The following is a 363-amino-acid chain: MSTGQLKRFKGCEYLTHRLVLATLSGTPIRVEGIYPDEADPGVKDYQVSFLRLLEKLTNGSVIEISYTGTSFIYRPGNIIGGRVVHDCPTTKGIGYFLEPILILCLFAKTPTSLTLTGVTSSNEDIGVDVLRTSVLPSLQKRFQVGDELELRILKRGSAPGGGGEVNFLCPVIKESLPPIRLSEFGRVFRIRGIASSTRVSPAFANRLVESARGVLNPFIPDVFIYTDVRRGDECGNSPGYSITLVAETNKGCSYAAEHCGEAGETPEDVGSFCAKKLLEVIESGGCVDPYTQPSTLTGMLLSSEDVNTIVVGQLGITSQLVVFLRDVKALFNCEYRFKELESGQVEMSCLGKGYLNVNRRIQ.

Belongs to the RNA 3'-terminal cyclase family. Type 2 subfamily. As to quaternary structure, interacts directly with bms1 and the U3 snoRNA to form a stable subcomplex. Component of the 90S small subunit processome also known as 90S pre-ribosome that consists of the 35S pre-rRNA, early-associating ribosomal proteins most of which are part of the small ribosomal subunit, the U3 snoRNA and associated proteins.

The protein resides in the nucleus. It is found in the nucleolus. In terms of biological role, does not have cyclase activity. Plays a role in 40S-ribosomal-subunit biogenesis in the early pre-rRNA processing steps at sites A0, A1 and A2 that are required for proper maturation of the 18S RNA. Rcl1 activates bms1 by promoting GDP/GTP exchange. This Schizosaccharomyces pombe (strain 972 / ATCC 24843) (Fission yeast) protein is rRNA processing protein rcl1 (rcl1).